A 735-amino-acid chain; its full sequence is Putative RNA polymerase II subunit B1 CTD phosphatase RPAP2 homolog (735 aa).

The RTR1-type zinc-finger motif lies at 33–118 (AARKLMSRSD…LQEARTLEFD (86 aa)). Zn(2+) is bound by residues Cys56, Cys61, Cys94, and Cys98. 3 disordered regions span residues 179–201 (VPFDRSKSSNDSKATTQSNQEKH), 349–374 (GKNTLSGSSSGSNTKGSKTKPEKSRK), and 519–538 (EHSEEEMTEEEPTLLKWPNK). Residues 349–364 (GKNTLSGSSSGSNTKG) show a composition bias toward low complexity. The span at 519–530 (EHSEEEMTEEEP) shows a compositional bias: acidic residues.

It belongs to the RPAP2 family.

Its subcellular location is the nucleus. It carries out the reaction O-phospho-L-seryl-[protein] + H2O = L-seryl-[protein] + phosphate. It catalyses the reaction O-phospho-L-threonyl-[protein] + H2O = L-threonyl-[protein] + phosphate. Functionally, putative RNA polymerase II subunit B1 C-terminal domain (CTD) phosphatase involved in RNA polymerase II transcription regulation. In Arabidopsis thaliana (Mouse-ear cress), this protein is Putative RNA polymerase II subunit B1 CTD phosphatase RPAP2 homolog.